Consider the following 98-residue polypeptide: NADH-ubiquinone oxidoreductase chain 4L (98 aa).

3 helical membrane passes run 1-21 (MYSS…VNLI), 27-47 (FLMT…FVPI), and 61-81 (VILL…MVLM).

The protein belongs to the complex I subunit 4L family.

The protein localises to the mitochondrion membrane. The catalysed reaction is a ubiquinone + NADH + 5 H(+)(in) = a ubiquinol + NAD(+) + 4 H(+)(out). Functionally, core subunit of the mitochondrial membrane respiratory chain NADH dehydrogenase (Complex I) that is believed to belong to the minimal assembly required for catalysis. Complex I functions in the transfer of electrons from NADH to the respiratory chain. The immediate electron acceptor for the enzyme is believed to be ubiquinone. In Lumbricus terrestris (Common earthworm), this protein is NADH-ubiquinone oxidoreductase chain 4L (ND4L).